Consider the following 555-residue polypeptide: Energy-dependent translational throttle protein EttA (555 aa).

2 consecutive ABC transporter domains span residues 6–259 (YTMH…AQEA) and 324–550 (LEVS…RIKY). An ATP-binding site is contributed by 39–46 (GLNGAGKS). The interval 95-139 (SEVVNALKRLDEVYALYADPDADFDKLAAEQGRLEEIIQAHDGHN) is arm. The interval 242–322 (GNYSSWLEQK…IPPGPRLGDK (81 aa)) is ptIM. Residue 356 to 363 (GPNGAGKS) coordinates ATP.

It belongs to the ABC transporter superfamily. ABCF family. Translational throttle EttA subfamily. In terms of assembly, monomer. Probably contacts ribosomal proteins L1, L5, L33 and S7, the 16S and 23S rRNA and the P-site containing tRNA(fMet).

The protein resides in the cytoplasm. The catalysed reaction is ATP + H2O = ADP + phosphate + H(+). In terms of biological role, a translation factor that gates the progression of the 70S ribosomal initiation complex (IC, containing tRNA(fMet) in the P-site) into the translation elongation cycle by using a mechanism sensitive to the ATP/ADP ratio. Binds to the 70S ribosome E-site where it modulates the state of the translating ribosome during subunit translocation. ATP hydrolysis probably frees it from the ribosome, which can enter the elongation phase. In Escherichia coli O6:H1 (strain CFT073 / ATCC 700928 / UPEC), this protein is Energy-dependent translational throttle protein EttA.